Here is a 350-residue protein sequence, read N- to C-terminus: Holliday junction branch migration complex subunit RuvB (350 aa).

Residues 1–183 (MSAERLVNPH…FVAVHRLVFY (183 aa)) form a large ATPase domain (RuvB-L) region. ATP contacts are provided by residues Leu22, Arg23, Gly64, Lys67, Thr68, Ser69, 130-132 (EDF), Arg173, Tyr183, and Arg220. Thr68 is a Mg(2+) binding site. The tract at residues 184–254 (SDAAMTEIVS…VAREALAQLE (71 aa)) is small ATPAse domain (RuvB-S). Positions 257–350 (ELGLDENDRR…ESGPQQGTLF (94 aa)) are head domain (RuvB-H). DNA-binding residues include Arg312 and Arg317.

The protein belongs to the RuvB family. As to quaternary structure, homohexamer. Forms an RuvA(8)-RuvB(12)-Holliday junction (HJ) complex. HJ DNA is sandwiched between 2 RuvA tetramers; dsDNA enters through RuvA and exits via RuvB. An RuvB hexamer assembles on each DNA strand where it exits the tetramer. Each RuvB hexamer is contacted by two RuvA subunits (via domain III) on 2 adjacent RuvB subunits; this complex drives branch migration. In the full resolvosome a probable DNA-RuvA(4)-RuvB(12)-RuvC(2) complex forms which resolves the HJ.

The protein localises to the cytoplasm. The enzyme catalyses ATP + H2O = ADP + phosphate + H(+). In terms of biological role, the RuvA-RuvB-RuvC complex processes Holliday junction (HJ) DNA during genetic recombination and DNA repair, while the RuvA-RuvB complex plays an important role in the rescue of blocked DNA replication forks via replication fork reversal (RFR). RuvA specifically binds to HJ cruciform DNA, conferring on it an open structure. The RuvB hexamer acts as an ATP-dependent pump, pulling dsDNA into and through the RuvAB complex. RuvB forms 2 homohexamers on either side of HJ DNA bound by 1 or 2 RuvA tetramers; 4 subunits per hexamer contact DNA at a time. Coordinated motions by a converter formed by DNA-disengaged RuvB subunits stimulates ATP hydrolysis and nucleotide exchange. Immobilization of the converter enables RuvB to convert the ATP-contained energy into a lever motion, pulling 2 nucleotides of DNA out of the RuvA tetramer per ATP hydrolyzed, thus driving DNA branch migration. The RuvB motors rotate together with the DNA substrate, which together with the progressing nucleotide cycle form the mechanistic basis for DNA recombination by continuous HJ branch migration. Branch migration allows RuvC to scan DNA until it finds its consensus sequence, where it cleaves and resolves cruciform DNA. The sequence is that of Holliday junction branch migration complex subunit RuvB from Chloroflexus aggregans (strain MD-66 / DSM 9485).